We begin with the raw amino-acid sequence, 468 residues long: Glutamyl-tRNA reductase (468 aa).

Residues 49 to 52, S109, 114 to 116, and Q120 each bind substrate; these read TCNR and EQQ. C50 functions as the Nucleophile in the catalytic mechanism. Residue 189–194 coordinates NADP(+); that stretch reads GAGAMG. Residues 443–468 form a disordered region; that stretch reads VPSGFDAESRRGGGDMQSSPKRSPSN. Positions 458-468 are enriched in polar residues; sequence MQSSPKRSPSN.

This sequence belongs to the glutamyl-tRNA reductase family. As to quaternary structure, homodimer.

It carries out the reaction (S)-4-amino-5-oxopentanoate + tRNA(Glu) + NADP(+) = L-glutamyl-tRNA(Glu) + NADPH + H(+). It participates in porphyrin-containing compound metabolism; protoporphyrin-IX biosynthesis; 5-aminolevulinate from L-glutamyl-tRNA(Glu): step 1/2. In terms of biological role, catalyzes the NADPH-dependent reduction of glutamyl-tRNA(Glu) to glutamate 1-semialdehyde (GSA). The polypeptide is Glutamyl-tRNA reductase (Mycobacterium tuberculosis (strain ATCC 25177 / H37Ra)).